We begin with the raw amino-acid sequence, 422 residues long: Phospho-N-acetylmuramoyl-pentapeptide-transferase (422 aa).

Transmembrane regions (helical) follow at residues 28 to 48 (LMAIILSLLISAIFGEYFINL), 71 to 91 (VGVPTMGGIIIIVAILIPCLL), 95 to 115 (LHNIYMILMLITTIWLGTLGF), 136 to 156 (IIGQVGLGLIVGLTLYLSPSV), 208 to 228 (AQAVGWIIFVLVTIFVVTAVS), 239 to 259 (GMAAGNSAIIGLTLGILAYVS), 279 to 299 (LVIFICSFIGALIGFLWYNAF), 313 to 333 (IGGIIAVFAIIIHKELLIPIL), and 399 to 419 (KITVRFWIVTIVLAAITIITL).

The protein belongs to the glycosyltransferase 4 family. MraY subfamily. Mg(2+) serves as cofactor.

It localises to the cell inner membrane. The catalysed reaction is UDP-N-acetyl-alpha-D-muramoyl-L-alanyl-gamma-D-glutamyl-meso-2,6-diaminopimeloyl-D-alanyl-D-alanine + di-trans,octa-cis-undecaprenyl phosphate = di-trans,octa-cis-undecaprenyl diphospho-N-acetyl-alpha-D-muramoyl-L-alanyl-D-glutamyl-meso-2,6-diaminopimeloyl-D-alanyl-D-alanine + UMP. It participates in cell wall biogenesis; peptidoglycan biosynthesis. Catalyzes the initial step of the lipid cycle reactions in the biosynthesis of the cell wall peptidoglycan: transfers peptidoglycan precursor phospho-MurNAc-pentapeptide from UDP-MurNAc-pentapeptide onto the lipid carrier undecaprenyl phosphate, yielding undecaprenyl-pyrophosphoryl-MurNAc-pentapeptide, known as lipid I. The chain is Phospho-N-acetylmuramoyl-pentapeptide-transferase from Phocaeicola vulgatus (strain ATCC 8482 / DSM 1447 / JCM 5826 / CCUG 4940 / NBRC 14291 / NCTC 11154) (Bacteroides vulgatus).